Consider the following 773-residue polypeptide: uncharacterized protein (773 aa).

The tract at residues 192 to 219 (EASGTNNNPKEIEMNSDTTSSVPKSGST) is disordered.

Its subcellular location is the cytoplasm. This is an uncharacterized protein from Schizosaccharomyces pombe (strain 972 / ATCC 24843) (Fission yeast).